Reading from the N-terminus, the 337-residue chain is MSLKLGVIGAGAIGKEHIRRCTQVLQGATVVAVSDINADNARAAVALPGVQAEVYADGHDVINASDVDAILVTSWDPTHEEYTLAAIAAGKPVFCEKPLAMTAEGCRRIVDAEMKAGRRLVQVGFMRPYDEGYLALKKVIDDGDIGAPLMLRCAHRNQSVGENYTTDMAITNTLIHELDVLRWLLNDDYRSVQVRFPRSTSHTHARLKDPQIVSFETKKGTLIDVEVFVNCQYGYDIQCEVVGETGIARLPEPSAVQMRKSASLSTAILTDWKDRFIKAYDVELQAFINDVKAGQLHGPSAWDGYAASVAADACIKAQGTSEPVEVTLPECPAFYKR.

The protein belongs to the Gfo/Idh/MocA family. As to quaternary structure, homotetramer.

The catalysed reaction is myo-inositol + NAD(+) = scyllo-inosose + NADH + H(+). Involved in the oxidation of myo-inositol (MI) to 2-keto-myo-inositol (2KMI or 2-inosose). The sequence is that of Inositol 2-dehydrogenase from Klebsiella pneumoniae subsp. pneumoniae (strain ATCC 700721 / MGH 78578).